The following is an 89-amino-acid chain: Elongation factor 1-beta (89 aa).

The protein belongs to the EF-1-beta/EF-1-delta family.

Its function is as follows. Promotes the exchange of GDP for GTP in EF-1-alpha/GDP, thus allowing the regeneration of EF-1-alpha/GTP that could then be used to form the ternary complex EF-1-alpha/GTP/AAtRNA. This is Elongation factor 1-beta from Methanococcus maripaludis (strain C5 / ATCC BAA-1333).